The following is an 84-amino-acid chain: Toluene-4-monooxygenase system, hydroxylase component subunit gamma (84 aa).

The protein belongs to the TmoB/XamoB family. As to quaternary structure, the alkene monooxygenase multicomponent enzyme system is composed of an electron transfer component and a monooxygenase component interacting with the effector protein TmoD. The electron transfer component is composed of a ferredoxin reductase (TmoF) and a ferredoxin (TmoC), and the monooxygenase component is formed by a heterohexamer (dimer of heterotrimers) of two alpha subunits (TmoA), two beta subunits (TmoE) and two gamma subunits (TmoB).

It carries out the reaction toluene + NADH + O2 + H(+) = 4-methylphenol + NAD(+) + H2O. It participates in xenobiotic degradation; toluene degradation. Inhibited by Zn(2+) and Cu(2+). Its function is as follows. Component of the toluene-4-monooxygenase multicomponent enzyme system which catalyzes the O2- and NADH-dependent hydroxylation of toluene to form p-cresol. Also able to convert benzene to phenol, catechol, and 1,2,3-trihydroxybenzene by successive hydroxylations. The protein is Toluene-4-monooxygenase system, hydroxylase component subunit gamma of Ectopseudomonas mendocina (Pseudomonas mendocina).